Reading from the N-terminus, the 92-residue chain is FMRFamide-like neuropeptides 16 (92 aa).

A signal peptide spans 1 to 24 (MNFSGFEFSSIVAFFLLILQLSTA). The propeptide occupies 25–55 (AVLPADYAYGVADEMSALPDSGSLFAEQRPS). 3 positions are modified to phenylalanine amide: F64, F74, and F84. The propeptide occupies 87-92 (SAPFEQ).

The protein belongs to the FARP (FMRFamide related peptide) family. In terms of tissue distribution, each flp gene is expressed in a distinct set of neurons.

Its subcellular location is the secreted. In terms of biological role, FMRFamides and FMRFamide-like peptides are neuropeptides. AQTFVRF-amide inhibits the activity of dissected pharyngeal myogenic muscle system. The protein is FMRFamide-like neuropeptides 16 of Caenorhabditis elegans.